The chain runs to 155 residues: MSEAKSGPEYASFFAVMGASAAMVFSALGAAYGTAKSGTGIAAMSVMRPEMIMKSIIPVVMAGIIAIYGLVVAVLIANSLNDGISLYRSFLQLGAGLSVGLSGLAAGFAIGIVGDAGVRGTAQQPRLFVGMILILIFAEVLGLYGLIVALILSTK.

At Met1–Tyr10 the chain is on the lumenal side. Residues Ala11–Gly33 traverse the membrane as a helical segment. The Cytoplasmic segment spans residues Thr34–Ser55. Residues Ile56–Ile76 form a helical membrane-spanning segment. The Lumenal segment spans residues Ala77–Gln92. A helical membrane pass occupies residues Leu93–Gly114. At Asp115–Met131 the chain is on the cytoplasmic side. A helical membrane pass occupies residues Ile132 to Leu152. Over Ser153–Lys155 the chain is Lumenal.

Belongs to the V-ATPase proteolipid subunit family. In terms of assembly, V-ATPase is a heteromultimeric enzyme made up of two complexes: the ATP-hydrolytic V1 complex and the proton translocation V0 complex. The V1 complex consists of three catalytic AB heterodimers that form a heterohexamer, three peripheral stalks each consisting of EG heterodimers, one central rotor including subunits D and F, and the regulatory subunits C and H. The proton translocation complex V0 consists of the proton transport subunit a, a ring of proteolipid subunits c9c'', rotary subunit d, subunits e and f, and the accessory subunits ATP6AP1/Ac45 and ATP6AP2/PRR. Interacts with the V0 complex V-ATPase subunit a4 ATP6V0A4. Interacts with LASS2. Interacts with RNF182; this interaction leads to ubiquitination and degradation via the proteasome pathway. Post-translationally, ubiquitinated by RNF182, leading to its degradation via the ubiquitin-proteasome pathway.

It localises to the cytoplasmic vesicle. The protein resides in the clathrin-coated vesicle membrane. It is found in the secretory vesicle. Its subcellular location is the synaptic vesicle membrane. Functionally, proton-conducting pore forming subunit of the V0 complex of vacuolar(H+)-ATPase (V-ATPase), a multisubunit enzyme composed of a peripheral complex (V1) that hydrolyzes ATP and a membrane integral complex (V0) that translocates protons. V-ATPase is responsible for acidifying and maintaining the pH of intracellular compartments and in some cell types, is targeted to the plasma membrane, where it is responsible for acidifying the extracellular environment. This is V-type proton ATPase 16 kDa proteolipid subunit c (ATP6V0C) from Ovis aries (Sheep).